Consider the following 343-residue polypeptide: Aspartate carbamoyltransferase catalytic subunit (343 aa).

2 residues coordinate carbamoyl phosphate: R54 and T55. K82 provides a ligand contact to L-aspartate. The carbamoyl phosphate site is built by R104, H134, and Q137. L-aspartate-binding residues include R177 and R232. The carbamoyl phosphate site is built by G277 and P278. Residues 323–343 form a disordered region; sequence PDQSNPQRNVTNTSNWQETKR.

It belongs to the aspartate/ornithine carbamoyltransferase superfamily. ATCase family. As to quaternary structure, heterododecamer (2C3:3R2) of six catalytic PyrB chains organized as two trimers (C3), and six regulatory PyrI chains organized as three dimers (R2).

It catalyses the reaction carbamoyl phosphate + L-aspartate = N-carbamoyl-L-aspartate + phosphate + H(+). The protein operates within pyrimidine metabolism; UMP biosynthesis via de novo pathway; (S)-dihydroorotate from bicarbonate: step 2/3. Functionally, catalyzes the condensation of carbamoyl phosphate and aspartate to form carbamoyl aspartate and inorganic phosphate, the committed step in the de novo pyrimidine nucleotide biosynthesis pathway. The sequence is that of Aspartate carbamoyltransferase catalytic subunit from Renibacterium salmoninarum (strain ATCC 33209 / DSM 20767 / JCM 11484 / NBRC 15589 / NCIMB 2235).